Reading from the N-terminus, the 412-residue chain is Divalent metal cation transporter MntH (412 aa).

Transmembrane regions (helical) follow at residues 19 to 39 (LSLM…GNFA), 46 to 66 (AAYG…AMLI), 98 to 118 (WVQA…GAAI), 122 to 142 (LLLG…TFLI), 155 to 175 (MVIG…LVFS), 196 to 216 (AVLL…IYLH), 241 to 261 (IAMT…AAAF), 286 to 306 (AAAV…TVVG), 348 to 368 (VLVL…VPLL), and 392 to 412 (LIVV…MSGI).

Belongs to the NRAMP family.

The protein localises to the cell inner membrane. In terms of biological role, h(+)-stimulated, divalent metal cation uptake system. The protein is Divalent metal cation transporter MntH of Pectobacterium carotovorum subsp. carotovorum (strain PC1).